Here is a 194-residue protein sequence, read N- to C-terminus: Large ribosomal subunit protein eL15 (194 aa).

A disordered region spans residues 164 to 194 (SAGKKGRGLRNKGIGAEKVRPSIRAHGRRGK). Residues 184–194 (PSIRAHGRRGK) show a composition bias toward basic residues.

Belongs to the eukaryotic ribosomal protein eL15 family.

The protein is Large ribosomal subunit protein eL15 (rpl15e) of Methanocaldococcus jannaschii (strain ATCC 43067 / DSM 2661 / JAL-1 / JCM 10045 / NBRC 100440) (Methanococcus jannaschii).